The chain runs to 445 residues: Tubulin beta chain (445 aa).

Residues 1–4 (MREI) carry the MREI motif motif. Q11, E69, S138, G142, T143, G144, N204, and N226 together coordinate GTP. Residue E69 coordinates Mg(2+). The disordered stretch occupies residues 421-445 (EYQQYQDATAEEEGEGEEEGDEEVA). The segment covering 429-445 (TAEEEGEGEEEGDEEVA) has biased composition (acidic residues). At E438 the chain carries 5-glutamyl polyglutamate.

Belongs to the tubulin family. As to quaternary structure, dimer of alpha and beta chains. A typical microtubule is a hollow water-filled tube with an outer diameter of 25 nm and an inner diameter of 15 nM. Alpha-beta heterodimers associate head-to-tail to form protofilaments running lengthwise along the microtubule wall with the beta-tubulin subunit facing the microtubule plus end conferring a structural polarity. Microtubules usually have 13 protofilaments but different protofilament numbers can be found in some organisms and specialized cells. Mg(2+) is required as a cofactor. Post-translationally, some glutamate residues at the C-terminus are polyglycylated, resulting in polyglycine chains on the gamma-carboxyl group. Glycylation is mainly limited to tubulin incorporated into axonemes (cilia and flagella) whereas glutamylation is prevalent in neuronal cells, centrioles, axonemes, and the mitotic spindle. Both modifications can coexist on the same protein on adjacent residues, and lowering polyglycylation levels increases polyglutamylation, and reciprocally. The precise function of polyglycylation is still unclear. In terms of processing, some glutamate residues at the C-terminus are polyglutamylated, resulting in polyglutamate chains on the gamma-carboxyl group. Polyglutamylation plays a key role in microtubule severing by spastin (SPAST). SPAST preferentially recognizes and acts on microtubules decorated with short polyglutamate tails: severing activity by SPAST increases as the number of glutamates per tubulin rises from one to eight, but decreases beyond this glutamylation threshold. Brain.

The protein resides in the cytoplasm. Its subcellular location is the cytoskeleton. In terms of biological role, tubulin is the major constituent of microtubules, a cylinder consisting of laterally associated linear protofilaments composed of alpha- and beta-tubulin heterodimers. Microtubules grow by the addition of GTP-tubulin dimers to the microtubule end, where a stabilizing cap forms. Below the cap, tubulin dimers are in GDP-bound state, owing to GTPase activity of alpha-tubulin. The polypeptide is Tubulin beta chain (Pseudopleuronectes americanus (Winter flounder)).